We begin with the raw amino-acid sequence, 317 residues long: Ricin B-like lectin EULS3 (317 aa).

Residues 1–11 (MEHHHQHHRHH) show a composition bias toward basic residues. The tract at residues 1–157 (MEHHHQHHRH…YHKPDENRLP (157 aa)) is disordered. Positions 25–36 (VPPPHVDAPPQP) are enriched in pro residues. A compositionally biased stretch (polar residues) spans 136–146 (HSSNQPQSSSG). In terms of domain architecture, Ricin B-type lectin spans 168 to 315 (TVKVYSKAEP…KGDNQLWKIF (148 aa)).

In terms of assembly, interacts (via N-terminus) with ATS3A and ATS3B. In terms of tissue distribution, expressed in roots, rosette leaves, stems, cauline leaves and flowers.

Its subcellular location is the nucleus. The protein resides in the cytoplasm. Lectin which binds carbohydrates in vitro. Interacts through its lectin domain with glycan structures containing one or more Lewis X, Lewis Y or lactosamine motifs. May play a role in abiotic stress responses. May play a role in abscisic acid-induced stomatal closure. May play a role in disease resistance against Pseudomonas syringae through its involvement in stomatal movement. The polypeptide is Ricin B-like lectin EULS3 (Arabidopsis thaliana (Mouse-ear cress)).